The sequence spans 127 residues: MRHRKSGRQLNRNSSHRQAMFRNMASALIGHEIIKTTLPKAKELRRVVEPLITLAKEDSVANRRLAFARTRNIETVAKLFNELGPRFAQRAGGYTRILKCGFRAGDNAPMAYIELVDRPEVAEVTAE.

This sequence belongs to the bacterial ribosomal protein bL17 family. In terms of assembly, part of the 50S ribosomal subunit. Contacts protein L32.

The protein is Large ribosomal subunit protein bL17 of Haemophilus ducreyi (strain 35000HP / ATCC 700724).